Reading from the N-terminus, the 461-residue chain is Sensor histidine kinase MctS (461 aa).

2 consecutive transmembrane segments (helical) span residues 7 to 27 (IIAL…TFIT) and 203 to 223 (FVIV…TCML). His-259 carries the phosphohistidine; by autocatalysis modification. The Histidine kinase domain occupies 360–450 (LYRVAQEAFN…TLTAMMPKSA (91 aa)).

Its subcellular location is the cell membrane. It catalyses the reaction ATP + protein L-histidine = ADP + protein N-phospho-L-histidine.. In terms of biological role, member of the two-component regulatory system MctS/MctR, which activates mctP expression. The polypeptide is Sensor histidine kinase MctS (Rhizobium johnstonii (strain DSM 114642 / LMG 32736 / 3841) (Rhizobium leguminosarum bv. viciae)).